The sequence spans 85 residues: MNSALNGIKDDFENCETKDDLFKIIDKISKNCNFIVEQVESLPRRVDSAAILFDNLAVEIFNDVIYRQNGVAAKIRQGNGQDIDT.

It belongs to the herpesviridae UL91 family.

This chain is Protein U62 (U62), found in Homo sapiens (Human).